Reading from the N-terminus, the 644-residue chain is Exoribonuclease 2 (644 aa).

The region spanning 189 to 516 (REDLTALDFV…NHRLLKAVIK (328 aa)) is the RNB domain. An S1 motif domain is found at 561–643 (DTRFAAEIVD…ETRSIIARPV (83 aa)).

Belongs to the RNR ribonuclease family. RNase II subfamily.

It localises to the cytoplasm. It carries out the reaction Exonucleolytic cleavage in the 3'- to 5'-direction to yield nucleoside 5'-phosphates.. Functionally, involved in mRNA degradation. Hydrolyzes single-stranded polyribonucleotides processively in the 3' to 5' direction. This Escherichia coli O45:K1 (strain S88 / ExPEC) protein is Exoribonuclease 2.